A 347-amino-acid chain; its full sequence is Haptoglobin (347 aa).

The N-terminal stretch at M1–A18 is a signal peptide. The 58-residue stretch at D31–A88 folds into the Sushi domain. Intrachain disulfides connect C52–C86, C90–C207, C250–C281, and C292–C322. The Peptidase S1 domain occupies I103–N347. 4 N-linked (GlcNAc...) asparagine glycosylation sites follow: N125, N148, N152, and N182. The segment at V259–T264 is interaction with CD163.

It belongs to the peptidase S1 family. In terms of assembly, tetramer of two alpha and two beta chains; disulfide-linked. The hemoglobin/haptoglobin complex is composed of a haptoglobin dimer bound to two hemoglobin alpha-beta dimers. Interacts with CD163. Interacts with ERGIC3.

It is found in the secreted. Its function is as follows. As a result of hemolysis, hemoglobin is found to accumulate in the kidney and is secreted in the urine. Haptoglobin captures, and combines with free plasma hemoglobin to allow hepatic recycling of heme iron and to prevent kidney damage. Haptoglobin also acts as an antioxidant, has antibacterial activity and plays a role in modulating many aspects of the acute phase response. Hemoglobin/haptoglobin complexes are rapidly cleared by the macrophage CD163 scavenger receptor expressed on the surface of liver Kupfer cells through an endocytic lysosomal degradation pathway. The sequence is that of Haptoglobin (HP) from Pongo abelii (Sumatran orangutan).